Consider the following 498-residue polypeptide: Early growth response protein 1 (498 aa).

2 disordered regions span residues 137–203 (NASP…TASI) and 287–308 (PSRM…RPYA). Positions 139 to 163 (SPSSAPSSSPSSSSSSSQSPPLSCS) are enriched in low complexity. Polar residues predominate over residues 179 to 202 (FPNSSPELFPDQSPQPFQNASTAS). 3 C2H2-type zinc fingers span residues 307 to 331 (YACP…IRIH), 337 to 359 (FQCR…IRTH), and 365 to 387 (FACD…TKIH). Residues 378 to 422 (DERKRHTKIHLRQKDKKADKATPVSVASPVSSYSPSASTSYPSPV) form a disordered region. Basic residues predominate over residues 382–392 (RHTKIHLRQKD). A compositionally biased stretch (low complexity) spans 398 to 422 (ATPVSVASPVSSYSPSASTSYPSPV).

The protein belongs to the EGR C2H2-type zinc-finger protein family.

It localises to the nucleus. The protein localises to the cytoplasm. Functionally, transcriptional regulator. Recognizes and binds to the DNA sequence 5'-GCG(T/G)GGGCG-3'(EGR-site) in the promoter region of target genes. Binds double-stranded target DNA, irrespective of the cytosine methylation status. Regulates the transcription of numerous target genes, and thereby plays an important role in regulating the response to growth factors, DNA damage, and ischemia. Plays a role in the regulation of cell survival, proliferation and cell death. Mediates responses to ischemia and hypoxia; regulates the expression of proteins that are involved in inflammatory processes. Plays a role in regulating the expression of circadian clock genes. This Xenopus tropicalis (Western clawed frog) protein is Early growth response protein 1.